A 254-amino-acid chain; its full sequence is Ribonuclease HII (254 aa).

An RNase H type-2 domain is found at 46 to 234; the sequence is KLIAGIDEVG…VWMASAPQEV (189 aa). A divalent metal cation is bound by residues aspartate 52, glutamate 53, and aspartate 144.

Belongs to the RNase HII family. Mn(2+) serves as cofactor. Mg(2+) is required as a cofactor.

Its subcellular location is the cytoplasm. It carries out the reaction Endonucleolytic cleavage to 5'-phosphomonoester.. In terms of biological role, endonuclease that specifically degrades the RNA of RNA-DNA hybrids. This chain is Ribonuclease HII, found in Koribacter versatilis (strain Ellin345).